Here is a 131-residue protein sequence, read N- to C-terminus: Large ribosomal subunit protein bL12 (131 aa).

Belongs to the bacterial ribosomal protein bL12 family. Homodimer. Part of the ribosomal stalk of the 50S ribosomal subunit. Forms a multimeric L10(L12)X complex, where L10 forms an elongated spine to which 2 to 4 L12 dimers bind in a sequential fashion. Binds GTP-bound translation factors.

Its function is as follows. Forms part of the ribosomal stalk which helps the ribosome interact with GTP-bound translation factors. Is thus essential for accurate translation. This chain is Large ribosomal subunit protein bL12, found in Prochlorococcus marinus (strain MIT 9301).